A 321-amino-acid polypeptide reads, in one-letter code: Aspartate carbamoyltransferase catalytic subunit (321 aa).

Residues arginine 65 and threonine 66 each contribute to the carbamoyl phosphate site. L-aspartate is bound at residue lysine 93. Residues arginine 115, histidine 143, and glutamine 146 each coordinate carbamoyl phosphate. L-aspartate-binding residues include arginine 176 and arginine 230. Residues glycine 271 and proline 272 each contribute to the carbamoyl phosphate site.

The protein belongs to the aspartate/ornithine carbamoyltransferase superfamily. ATCase family. Heterododecamer (2C3:3R2) of six catalytic PyrB chains organized as two trimers (C3), and six regulatory PyrI chains organized as three dimers (R2).

It carries out the reaction carbamoyl phosphate + L-aspartate = N-carbamoyl-L-aspartate + phosphate + H(+). It participates in pyrimidine metabolism; UMP biosynthesis via de novo pathway; (S)-dihydroorotate from bicarbonate: step 2/3. Functionally, catalyzes the condensation of carbamoyl phosphate and aspartate to form carbamoyl aspartate and inorganic phosphate, the committed step in the de novo pyrimidine nucleotide biosynthesis pathway. The chain is Aspartate carbamoyltransferase catalytic subunit from Bartonella henselae (strain ATCC 49882 / DSM 28221 / CCUG 30454 / Houston 1) (Rochalimaea henselae).